A 357-amino-acid polypeptide reads, in one-letter code: UPF0283 membrane protein BOV_0999 (357 aa).

The tract at residues 1–36 (MSDKTPRKPTAFRLEQPARVSAASEQEEPRRPRAVK) is disordered. Positions 27–36 (EEPRRPRAVK) are enriched in basic and acidic residues. Helical transmembrane passes span 78–98 (ILFG…TEDL) and 109–129 (LGWT…AIIL).

Belongs to the UPF0283 family.

The protein localises to the cell inner membrane. This is UPF0283 membrane protein BOV_0999 from Brucella ovis (strain ATCC 25840 / 63/290 / NCTC 10512).